Consider the following 227-residue polypeptide: Phosphoglycolate phosphatase (227 aa).

The Nucleophile role is filled by Asp-11. Residues Asp-11 and Asp-13 each coordinate Mg(2+). Substrate is bound at residue Lys-155. Residues Asp-178 and Asp-182 each contribute to the Mg(2+) site.

The protein belongs to the archaeal SPP-like hydrolase family. Mg(2+) is required as a cofactor.

The enzyme catalyses 2-phosphoglycolate + H2O = glycolate + phosphate. Its function is as follows. Catalyzes the dephosphorylation of 2-phosphoglycolate. This is Phosphoglycolate phosphatase from Haloarcula marismortui (strain ATCC 43049 / DSM 3752 / JCM 8966 / VKM B-1809) (Halobacterium marismortui).